The primary structure comprises 95 residues: Secretoglobin family 2A member 1 (95 aa).

The N-terminal stretch at 1-18 (MKLVFLFLLVTIPICCYA) is a signal peptide. N-linked (GlcNAc...) asparagine glycans are attached at residues Asn35 and Asn72.

The protein belongs to the secretoglobin family. Lipophilin subfamily. In terms of assembly, prostatein is composed of three different peptides called C1, C2 and C3. These form covalent C1:C3 (F) and C2:C3 (S) heterodimers whose non-covalent association forms tetrameric (C1:C3/C3:C2) prostatein molecules. In terms of tissue distribution, expressed at very low level in ventral prostate.

It localises to the secreted. Functionally, part of prostatein which is the major secretory glycoprotein of ventral prostate gland. Steroid-binding protein; can bind non-polar steroids, cholesterol and a group of small proline-rich peptides. This chain is Secretoglobin family 2A member 1, found in Rattus norvegicus (Rat).